Consider the following 997-residue polypeptide: FIP1[III]-like protein (997 aa).

4 disordered regions span residues I250 to V272, A289 to G475, S534 to D553, and Q880 to Q900. The segment covering S261–V272 has biased composition (polar residues). 4 stretches are compositionally biased toward basic and acidic residues: residues T309–S323, S334–R346, E367–E379, and R388–G404. Residues I397 to G404 carry the Nuclear localization signal motif. Positions S534–S547 are enriched in polar residues. The stretch at E930–K963 forms a coiled coil.

Belongs to the FIP1 family. As to quaternary structure, component of the cleavage and polyadenylation specificity factor (CPSF) complex. Forms a complex with cleavage and polyadenylation specificity factor (CPSF) subunits CLPS5, FIPS5, PAPS4, PCFS1, CSTF64 and CPSF30.

Its subcellular location is the nucleus. Component of the cleavage and polyadenylation specificity factor (CPSF) complex that plays a key role in pre-mRNA 3'-end formation, recognizing the AAUAAA signal sequence and interacting with poly(A) polymerase and other factors to bring about cleavage and poly(A) addition. FIP1L1 contributes to poly(A) site recognition and stimulates poly(A) addition. Binds to U-rich RNA sequence elements surrounding the poly(A) site. May act to tether poly(A) polymerase to the CPSF complex. This chain is FIP1[III]-like protein, found in Arabidopsis thaliana (Mouse-ear cress).